The primary structure comprises 385 residues: Cell division protein FtsZ (385 aa).

GTP is bound by residues 20 to 24, 107 to 109, Glu-138, Arg-142, and Asn-186; these read GGGGN and GTG.

Belongs to the FtsZ family. Homodimer. Polymerizes to form a dynamic ring structure in a strictly GTP-dependent manner. Interacts directly with several other division proteins.

It is found in the cytoplasm. Its function is as follows. Essential cell division protein that forms a contractile ring structure (Z ring) at the future cell division site. The regulation of the ring assembly controls the timing and the location of cell division. One of the functions of the FtsZ ring is to recruit other cell division proteins to the septum to produce a new cell wall between the dividing cells. Binds GTP and shows GTPase activity. In Buchnera aphidicola subsp. Baizongia pistaciae (strain Bp), this protein is Cell division protein FtsZ.